The chain runs to 458 residues: Phosphoglucosamine mutase (458 aa).

Ser106 functions as the Phosphoserine intermediate in the catalytic mechanism. Residues Ser106, Asp247, Asp249, and Asp251 each contribute to the Mg(2+) site. At Ser106 the chain carries Phosphoserine.

Belongs to the phosphohexose mutase family. It depends on Mg(2+) as a cofactor. Activated by phosphorylation.

The catalysed reaction is alpha-D-glucosamine 1-phosphate = D-glucosamine 6-phosphate. Catalyzes the conversion of glucosamine-6-phosphate to glucosamine-1-phosphate. This Chlamydia caviae (strain ATCC VR-813 / DSM 19441 / 03DC25 / GPIC) (Chlamydophila caviae) protein is Phosphoglucosamine mutase.